A 671-amino-acid chain; its full sequence is DNA ligase (671 aa).

Residues 32–36 (DAEYD), 81–82 (SL), and Glu113 contribute to the NAD(+) site. Lys115 acts as the N6-AMP-lysine intermediate in catalysis. NAD(+) contacts are provided by Arg136, Glu173, Lys290, and Lys314. Residues Cys408, Cys411, Cys426, and Cys432 each contribute to the Zn(2+) site. The BRCT domain maps to 593–671 (EIDSPFAGKT…EAEMMRLLGE (79 aa)).

It belongs to the NAD-dependent DNA ligase family. LigA subfamily. Mg(2+) is required as a cofactor. The cofactor is Mn(2+).

It catalyses the reaction NAD(+) + (deoxyribonucleotide)n-3'-hydroxyl + 5'-phospho-(deoxyribonucleotide)m = (deoxyribonucleotide)n+m + AMP + beta-nicotinamide D-nucleotide.. In terms of biological role, DNA ligase that catalyzes the formation of phosphodiester linkages between 5'-phosphoryl and 3'-hydroxyl groups in double-stranded DNA using NAD as a coenzyme and as the energy source for the reaction. It is essential for DNA replication and repair of damaged DNA. The chain is DNA ligase from Klebsiella pneumoniae (strain 342).